A 56-amino-acid chain; its full sequence is Large ribosomal subunit protein bL32 (56 aa).

The disordered stretch occupies residues 1 to 21 (MGVPQRRQSHARKNKRRSEWR). Basic residues predominate over residues 7-19 (RQSHARKNKRRSE).

This sequence belongs to the bacterial ribosomal protein bL32 family.

The protein is Large ribosomal subunit protein bL32 of Syntrophomonas wolfei subsp. wolfei (strain DSM 2245B / Goettingen).